Consider the following 130-residue polypeptide: UPF0102 protein BT_1882 (130 aa).

This sequence belongs to the UPF0102 family.

In Bartonella tribocorum (strain CIP 105476 / IBS 506), this protein is UPF0102 protein BT_1882.